Here is a 296-residue protein sequence, read N- to C-terminus: Cytidine deaminase (296 aa).

CMP/dCMP-type deaminase domains lie at 52–172 and 191–296; these read TAVE…FGPK and THAD…YFAL. Residue 93-95 participates in substrate binding; that stretch reads NQE. Histidine 106 contributes to the Zn(2+) binding site. The Proton donor role is filled by glutamate 108. Residues cysteine 133 and cysteine 136 each contribute to the Zn(2+) site.

This sequence belongs to the cytidine and deoxycytidylate deaminase family. In terms of assembly, homodimer. Zn(2+) serves as cofactor.

The catalysed reaction is cytidine + H2O + H(+) = uridine + NH4(+). It catalyses the reaction 2'-deoxycytidine + H2O + H(+) = 2'-deoxyuridine + NH4(+). Its function is as follows. This enzyme scavenges exogenous and endogenous cytidine and 2'-deoxycytidine for UMP synthesis. In Actinobacillus succinogenes (strain ATCC 55618 / DSM 22257 / CCUG 43843 / 130Z), this protein is Cytidine deaminase.